A 296-amino-acid chain; its full sequence is Small ribosomal subunit protein uS2 (296 aa).

Disordered regions lie at residues 1 to 24 (MNTKKEEVVSSPEATVEKKQTQSQ) and 270 to 296 (HELKKSEEASEVKAASTKEKLTEEASQ).

Belongs to the universal ribosomal protein uS2 family.

The polypeptide is Small ribosomal subunit protein uS2 (Mycoplasmopsis synoviae (strain 53) (Mycoplasma synoviae)).